The primary structure comprises 1047 residues: Cation efflux system protein CusA (1047 aa).

The next 12 helical transmembrane spans lie at 14-34 (FLVL…IINT), 338-358 (LSGK…LFLW), 363-383 (ALVA…VMHF), 391-411 (MSLG…IVMI), 446-466 (VGPA…PIFT), 485-505 (AMAG…GYWI), 532-552 (VLHW…TVLW), 871-891 (KLKL…YLAF), 898-918 (LLII…LWWM), 928-948 (TGFI…LMYL), 985-1005 (AMTV…TGAG), and 1012-1032 (IAAP…FIIP).

It belongs to the resistance-nodulation-cell division (RND) (TC 2.A.6) family. The cus efflux system is composed of CusA, CusB, CusC and CusF.

The protein localises to the cell inner membrane. Its function is as follows. Part of a cation efflux system that mediates resistance to copper and silver. The sequence is that of Cation efflux system protein CusA (cusA) from Escherichia coli (strain K12).